Consider the following 405-residue polypeptide: Elongation factor Tu (405 aa).

The region spanning 10 to 215 is the tr-type G domain; that stretch reads KPHVNVGTIG…AIDAYIPTPE (206 aa). Residues 19 to 26 form a G1 region; the sequence is GHVDHGKT. 19 to 26 lines the GTP pocket; sequence GHVDHGKT. Position 26 (T26) interacts with Mg(2+). Positions 61-65 are G2; sequence GITIN. Residues 82–85 are G3; it reads DCPG. GTP-binding positions include 82 to 86 and 137 to 140; these read DCPGH and NKVD. The interval 137–140 is G4; that stretch reads NKVD. The interval 175–177 is G5; that stretch reads SAL.

This sequence belongs to the TRAFAC class translation factor GTPase superfamily. Classic translation factor GTPase family. EF-Tu/EF-1A subfamily. Monomer.

Its subcellular location is the cytoplasm. The catalysed reaction is GTP + H2O = GDP + phosphate + H(+). Its function is as follows. GTP hydrolase that promotes the GTP-dependent binding of aminoacyl-tRNA to the A-site of ribosomes during protein biosynthesis. The chain is Elongation factor Tu from Deinococcus geothermalis (strain DSM 11300 / CIP 105573 / AG-3a).